The chain runs to 124 residues: MINKISGTEIRALAKHICMSPHKARRVIDQIRGCSYEQTLMILELMPYRVCYPVFKLVYSAAANASHNMGLNEADSFISKAEVHGGAMMKKFKPKARGRSYPIKRPTCHITIVLKERKKSPLVV.

This sequence belongs to the universal ribosomal protein uL22 family. Part of the 50S ribosomal subunit.

The protein localises to the plastid. It is found in the chloroplast. Its function is as follows. This protein binds specifically to 23S rRNA. Functionally, the globular domain of the protein is located near the polypeptide exit tunnel on the outside of the subunit, while an extended beta-hairpin is found that lines the wall of the exit tunnel in the center of the 70S ribosome. This is Large ribosomal subunit protein uL22c (rpl22) from Amborella trichopoda.